We begin with the raw amino-acid sequence, 416 residues long: Imidazolonepropionase (416 aa).

Fe(3+) is bound by residues His82 and His84. The Zn(2+) site is built by His82 and His84. 4-imidazolone-5-propanoate contacts are provided by Arg91, Tyr154, and His187. Residue Tyr154 coordinates N-formimidoyl-L-glutamate. Fe(3+) is bound at residue His252. Residue His252 coordinates Zn(2+). Glu255 provides a ligand contact to 4-imidazolone-5-propanoate. Asp326 provides a ligand contact to Fe(3+). Position 326 (Asp326) interacts with Zn(2+). Asn328 and Gly330 together coordinate N-formimidoyl-L-glutamate. Ser331 provides a ligand contact to 4-imidazolone-5-propanoate.

The protein belongs to the metallo-dependent hydrolases superfamily. HutI family. Zn(2+) is required as a cofactor. Fe(3+) serves as cofactor.

It localises to the cytoplasm. The enzyme catalyses 4-imidazolone-5-propanoate + H2O = N-formimidoyl-L-glutamate. Its pathway is amino-acid degradation; L-histidine degradation into L-glutamate; N-formimidoyl-L-glutamate from L-histidine: step 3/3. Its function is as follows. Catalyzes the hydrolytic cleavage of the carbon-nitrogen bond in imidazolone-5-propanoate to yield N-formimidoyl-L-glutamate. It is the third step in the universal histidine degradation pathway. This chain is Imidazolonepropionase, found in Parabacteroides distasonis (strain ATCC 8503 / DSM 20701 / CIP 104284 / JCM 5825 / NCTC 11152).